The following is a 540-amino-acid chain: Chaperonin GroEL 4 (540 aa).

ATP contacts are provided by residues 29-32 (TLGP), 86-90 (DGTTT), Gly-413, 477-479 (NAA), and Asp-493.

This sequence belongs to the chaperonin (HSP60) family. In terms of assembly, forms a cylinder of 14 subunits composed of two heptameric rings stacked back-to-back. Interacts with the co-chaperonin GroES.

It is found in the cytoplasm. It carries out the reaction ATP + H2O + a folded polypeptide = ADP + phosphate + an unfolded polypeptide.. Functionally, together with its co-chaperonin GroES, plays an essential role in assisting protein folding. The GroEL-GroES system forms a nano-cage that allows encapsulation of the non-native substrate proteins and provides a physical environment optimized to promote and accelerate protein folding. The sequence is that of Chaperonin GroEL 4 from Frankia casuarinae (strain DSM 45818 / CECT 9043 / HFP020203 / CcI3).